Reading from the N-terminus, the 185-residue chain is Sulfopyruvate decarboxylase subunit beta (185 aa).

Belongs to the TPP enzyme family. Heterododecamer composed of 6 subunits alpha and 6 subunits beta. Thiamine diphosphate is required as a cofactor.

It carries out the reaction 3-sulfopyruvate + H(+) = sulfoacetaldehyde + CO2. The protein operates within cofactor biosynthesis; coenzyme M biosynthesis; sulfoacetaldehyde from phosphoenolpyruvate and sulfite: step 4/4. Its function is as follows. Involved in the biosynthesis of the coenzyme M (2-mercaptoethanesulfonic acid). Catalyzes the decarboxylation of sulfopyruvate to sulfoacetaldehyde. This chain is Sulfopyruvate decarboxylase subunit beta, found in Methanococcus maripaludis (strain DSM 14266 / JCM 13030 / NBRC 101832 / S2 / LL).